We begin with the raw amino-acid sequence, 2280 residues long: Metacaspase-3 (2280 aa).

Disordered stretches follow at residues 56 to 83, 202 to 284, 791 to 819, 931 to 954, 994 to 1015, 1278 to 1306, and 1469 to 1500; these read ILSK…DRED, YSTE…THRG, YKNS…MVNN, DDNS…RYDK, SGKY…DDSE, KTNN…NPFI, and KAPT…NANA. The segment covering 63-83 has biased composition (basic and acidic residues); the sequence is NKNENIKKRINEKDNDTDRED. 2 stretches are compositionally biased toward polar residues: residues 205 to 219 and 228 to 278; these read EHTQ…TSKR and DKAQ…NRKG. 2 stretches are compositionally biased toward low complexity: residues 793-819 and 931-941; these read NSMN…MVNN and DDNSVQDSFFS. Composition is skewed to low complexity over residues 1278 to 1303 and 1482 to 1500; these read KTNN…NNSN and APTN…NANA.

This sequence belongs to the peptidase C14B family.

In terms of biological role, protease that cleaves specifically after arginine or lysine residues. This is Metacaspase-3 from Plasmodium falciparum (isolate 3D7).